A 476-amino-acid chain; its full sequence is RNA-binding protein 45 (476 aa).

The span at 1–14 (MDDAGGLGGSGGFR) shows a compositional bias: gly residues. Residues 1–20 (MDDAGGLGGSGGFRPGVDSL) are disordered. RRM domains lie at 26-106 (SRIF…IAQS) and 121-192 (TRIF…LAEP). Residue Lys-34 forms a Glycyl lysine isopeptide (Lys-Gly) (interchain with G-Cter in SUMO2) linkage. Positions 192–212 (PKNKVSGSPEQDDYSSGRQEA) are disordered. Positions 196–209 (VSGSPEQDDYSSGR) are enriched in polar residues. Ser-199 and Ser-464 each carry phosphoserine. An RRM 3 domain is found at 392–464 (ERLFVVFNPH…VRLKVMLADS (73 aa)).

The protein localises to the cytoplasm. The protein resides in the nucleus. Functionally, RNA-binding protein with binding specificity for poly(C). May play an important role in neural development. The chain is RNA-binding protein 45 (Rbm45) from Mus musculus (Mouse).